The primary structure comprises 134 residues: Cytochrome b5 (134 aa).

The Cytochrome b5 heme-binding domain occupies 5-81 (KKVLGFEEVS…MEKYYIGEID (77 aa)). The heme site is built by histidine 40 and histidine 64. Residues 107-127 (FMIKILQFLVPILILGLALVV) form a helical membrane-spanning segment.

It belongs to the cytochrome b5 family.

The protein resides in the endoplasmic reticulum membrane. It localises to the microsome membrane. Its function is as follows. Membrane bound hemoprotein which function as an electron carrier for several membrane bound oxygenases. This is Cytochrome b5 (CYB5) from Brassica oleracea var. botrytis (Cauliflower).